We begin with the raw amino-acid sequence, 715 residues long: Protein naked cuticle homolog (715 aa).

In terms of domain architecture, EF-hand spans lysine 18–serine 53. A disordered region spans residues serine 256–proline 282. Over residues arginine 257–serine 273 the composition is skewed to basic residues. The segment at glutamate 305–asparagine 334 is required for nuclear localization and inhibition of Wnt signaling. The disordered stretch occupies residues glutamate 639–threonine 690. Low complexity-rich tracts occupy residues glutamine 642–proline 664 and glycine 673–threonine 690.

It belongs to the NKD family.

The protein resides in the cell membrane. Its subcellular location is the cytoplasm. The protein localises to the nucleus. In terms of biological role, cell autonomous antagonist of the canonical Wnt signaling pathway. May activate a second Wnt signaling pathway that controls planar cell polarity. Required for neuroblast specification. The protein is Protein naked cuticle homolog of Aedes aegypti (Yellowfever mosquito).